A 235-amino-acid polypeptide reads, in one-letter code: Homeobox protein Nkx-2.8 (235 aa).

Residues 51 to 67 (SDESGLETSPADSSQLA) are compositionally biased toward polar residues. The segment at 51 to 86 (SDESGLETSPADSSQLASLRRESPGSDPEKRRKRRV) is disordered. A compositionally biased stretch (basic and acidic residues) spans 69–80 (LRRESPGSDPEK). The homeobox DNA-binding region spans 81–140 (RRKRRVLFSKAQTLELERRFRQQRYLSAPEREQLARLLRLTPTQVKIWFQNHRYKLKRGR).

This sequence belongs to the NK-2 homeobox family. Prominent expression in ventral brain and neural tube structures.

The protein resides in the nucleus. In terms of biological role, possible role in the specification of a distinct subset of neurons. The chain is Homeobox protein Nkx-2.8 (Nkx2-8) from Mus musculus (Mouse).